Here is a 98-residue protein sequence, read N- to C-terminus: Large ribosomal subunit protein uL23 (98 aa).

This sequence belongs to the universal ribosomal protein uL23 family. Part of the 50S ribosomal subunit. Contacts protein L29, and trigger factor when it is bound to the ribosome.

One of the early assembly proteins it binds 23S rRNA. One of the proteins that surrounds the polypeptide exit tunnel on the outside of the ribosome. Forms the main docking site for trigger factor binding to the ribosome. The polypeptide is Large ribosomal subunit protein uL23 (Nitrobacter winogradskyi (strain ATCC 25391 / DSM 10237 / CIP 104748 / NCIMB 11846 / Nb-255)).